A 348-amino-acid polypeptide reads, in one-letter code: 3-isopropylmalate dehydrogenase (348 aa).

76-87 (GPKWTDPNNRPE) contributes to the NAD(+) binding site. Substrate-binding residues include Arg94, Arg104, Arg132, and Asp217. 3 residues coordinate Mg(2+): Asp217, Asp241, and Asp245. An NAD(+)-binding site is contributed by 275–287 (GSAPDIAGKNVAN).

It belongs to the isocitrate and isopropylmalate dehydrogenases family. LeuB type 1 subfamily. In terms of assembly, homodimer. It depends on Mg(2+) as a cofactor. The cofactor is Mn(2+).

The protein resides in the cytoplasm. It carries out the reaction (2R,3S)-3-isopropylmalate + NAD(+) = 4-methyl-2-oxopentanoate + CO2 + NADH. Its pathway is amino-acid biosynthesis; L-leucine biosynthesis; L-leucine from 3-methyl-2-oxobutanoate: step 3/4. In terms of biological role, catalyzes the oxidation of 3-carboxy-2-hydroxy-4-methylpentanoate (3-isopropylmalate) to 3-carboxy-4-methyl-2-oxopentanoate. The product decarboxylates to 4-methyl-2 oxopentanoate. This is 3-isopropylmalate dehydrogenase from Staphylococcus aureus (strain Mu50 / ATCC 700699).